The sequence spans 306 residues: Pantothenate kinase (306 aa).

Position 90-97 (90-97) interacts with ATP; sequence GSVAVGKS.

It belongs to the prokaryotic pantothenate kinase family.

It is found in the cytoplasm. The catalysed reaction is (R)-pantothenate + ATP = (R)-4'-phosphopantothenate + ADP + H(+). The protein operates within cofactor biosynthesis; coenzyme A biosynthesis; CoA from (R)-pantothenate: step 1/5. This is Pantothenate kinase from Lactococcus lactis subsp. cremoris (strain SK11).